Consider the following 87-residue polypeptide: Apolipoprotein C-I (87 aa).

The signal sequence occupies residues 1–26 (MRLFLSLPVLVVVLAMVLEGPAPAQA).

This sequence belongs to the apolipoprotein C1 family.

It localises to the secreted. Inhibitor of lipoprotein binding to the low density lipoprotein (LDL) receptor, LDL receptor-related protein, and very low density lipoprotein (VLDL) receptor. Associates with high density lipoproteins (HDL) and the triacylglycerol-rich lipoproteins in the plasma and makes up about 10% of the protein of the VLDL and 2% of that of HDL. Appears to interfere directly with fatty acid uptake and is also the major plasma inhibitor of cholesteryl ester transfer protein (CETP). Binds free fatty acids and reduces their intracellular esterification. Modulates the interaction of APOE with beta-migrating VLDL and inhibits binding of beta-VLDL to the LDL receptor-related protein. The polypeptide is Apolipoprotein C-I (APOC1) (Zalophus californianus (California sealion)).